Here is a 530-residue protein sequence, read N- to C-terminus: Arginine--tRNA ligase (530 aa).

The 'HIGH' region motif lies at 113–123 (ANPTGPLHIGH).

Belongs to the class-I aminoacyl-tRNA synthetase family. As to quaternary structure, monomer.

Its subcellular location is the cytoplasm. It carries out the reaction tRNA(Arg) + L-arginine + ATP = L-arginyl-tRNA(Arg) + AMP + diphosphate. This chain is Arginine--tRNA ligase, found in Campylobacter jejuni subsp. jejuni serotype O:23/36 (strain 81-176).